Here is a 20-residue protein sequence, read N- to C-terminus: Trypsin inhibitor DE-3 (20 aa).

Belongs to the protease inhibitor I3 (leguminous Kunitz-type inhibitor) family.

In terms of biological role, inhibition of trypsin. The polypeptide is Trypsin inhibitor DE-3 (Erythrina corallodendron (Coral tree)).